The following is a 209-amino-acid chain: CASP-like protein 1A1 (209 aa).

Positions 1–26 (MEEAKHNEAEEAQGIEAREAKQIEAG) are disordered. Topologically, residues 1–49 (MEEAKHNEAEEAQGIEAREAKQIEAGETSRSSRKLITFEPKLVINKGIS) are cytoplasmic. Residues 50–70 (VLGFVLRLFAVFGTIGSALAM) form a helical membrane-spanning segment. At 71–95 (GTTHESVVSLSQLVLLKVKYSDLPT) the chain is on the extracellular side. A helical membrane pass occupies residues 96–116 (LMFFVVANAISGGYLVLSLPV). At 117–130 (SIFHIFSTQAKTSR) the chain is on the cytoplasmic side. The helical transmembrane segment at 131 to 151 (IILLVVDTVMLALVSSGASAA) threads the bilayer. Topologically, residues 152 to 183 (TATVYLAHEGNTTANWPPICQQFDGFCERISG) are extracellular. Asn162 carries N-linked (GlcNAc...) asparagine glycosylation. A helical membrane pass occupies residues 184 to 204 (SLIGSFCAVILLMLIVINSAI). The Cytoplasmic segment spans residues 205–209 (SLSRH).

This sequence belongs to the Casparian strip membrane proteins (CASP) family. In terms of assembly, homodimer and heterodimers. Expressed in the root endodermis.

Its subcellular location is the cell membrane. This Arabidopsis thaliana (Mouse-ear cress) protein is CASP-like protein 1A1.